The following is a 573-amino-acid chain: Glucocorticoid modulatory element-binding protein 1 (573 aa).

A2 bears the N-acetylalanine mark. The region spanning 82–166 is the SAND domain; that stretch reads TGTIEANEDM…RKMMDSGQID (85 aa). C113 lines the Zn(2+) pocket. DNA contacts are provided by K139, K143, K146, and R157. Zn(2+)-binding residues include H170, C174, and C178. The stretch at 321–367 forms a coiled coil; the sequence is LDNRRNQVEQGEEQFLYTLTDLERQLEEQKKQGQDHRLKSQTVQNVV. Residues 370-398 form a disordered region; sequence PVSTPKPPKRPRLQRPASTTVLSPSPPVQ.

In terms of assembly, homodimer, and heterodimer of GMEB1 and GMEB2. GMEB1 and GMEB2 form the parvovirus initiator complex (PIF). Interacts with the glucocorticoid receptor (NR3C1) and NCOA2/TIF2. May interact with HSP27 and CREB-binding protein (CBP).

The protein localises to the nucleus. The protein resides in the cytoplasm. Trans-acting factor that binds to glucocorticoid modulatory elements (GME) present in the TAT (tyrosine aminotransferase) promoter and increases sensitivity to low concentrations of glucocorticoids. Also binds to the transferrin receptor promoter. Essential auxiliary factor for the replication of parvoviruses. This is Glucocorticoid modulatory element-binding protein 1 (GMEB1) from Homo sapiens (Human).